The sequence spans 245 residues: Ubiquinone/menaquinone biosynthesis C-methyltransferase UbiE (245 aa).

Residues Thr71, Asp92, and 118–119 (DA) each bind S-adenosyl-L-methionine.

Belongs to the class I-like SAM-binding methyltransferase superfamily. MenG/UbiE family.

The catalysed reaction is a 2-demethylmenaquinol + S-adenosyl-L-methionine = a menaquinol + S-adenosyl-L-homocysteine + H(+). It catalyses the reaction a 2-methoxy-6-(all-trans-polyprenyl)benzene-1,4-diol + S-adenosyl-L-methionine = a 5-methoxy-2-methyl-3-(all-trans-polyprenyl)benzene-1,4-diol + S-adenosyl-L-homocysteine + H(+). It functions in the pathway quinol/quinone metabolism; menaquinone biosynthesis; menaquinol from 1,4-dihydroxy-2-naphthoate: step 2/2. The protein operates within cofactor biosynthesis; ubiquinone biosynthesis. In terms of biological role, methyltransferase required for the conversion of demethylmenaquinol (DMKH2) to menaquinol (MKH2) and the conversion of 2-polyprenyl-6-methoxy-1,4-benzoquinol (DDMQH2) to 2-polyprenyl-3-methyl-6-methoxy-1,4-benzoquinol (DMQH2). This is Ubiquinone/menaquinone biosynthesis C-methyltransferase UbiE from Neisseria gonorrhoeae (strain ATCC 700825 / FA 1090).